The chain runs to 118 residues: Putative membrane protein insertion efficiency factor (118 aa).

Belongs to the UPF0161 family.

Its subcellular location is the cell inner membrane. Functionally, could be involved in insertion of integral membrane proteins into the membrane. In Helicobacter pylori (strain HPAG1), this protein is Putative membrane protein insertion efficiency factor.